Here is a 309-residue protein sequence, read N- to C-terminus: uncharacterized protein (309 aa).

A helical transmembrane segment spans residues 23-39 (RFNVAIIGGTGGLGRAI).

This sequence belongs to the NmrA-type oxidoreductase family.

It is found in the membrane. This is an uncharacterized protein from Saccharomyces cerevisiae (strain ATCC 204508 / S288c) (Baker's yeast).